We begin with the raw amino-acid sequence, 117 residues long: Ribosomal silencing factor RsfS (117 aa).

This sequence belongs to the Iojap/RsfS family. As to quaternary structure, interacts with ribosomal protein uL14 (rplN).

It localises to the cytoplasm. Functions as a ribosomal silencing factor. Interacts with ribosomal protein uL14 (rplN), blocking formation of intersubunit bridge B8. Prevents association of the 30S and 50S ribosomal subunits and the formation of functional ribosomes, thus repressing translation. The protein is Ribosomal silencing factor RsfS of Halalkalibacterium halodurans (strain ATCC BAA-125 / DSM 18197 / FERM 7344 / JCM 9153 / C-125) (Bacillus halodurans).